Reading from the N-terminus, the 173-residue chain is Phosphopantetheine adenylyltransferase (173 aa).

A substrate-binding site is contributed by Thr9. Residues 9-10 (TF) and His17 each bind ATP. Positions 41, 75, and 89 each coordinate substrate. Residues 90–92 (GLR), Glu100, and 125–131 (HIYLSSS) contribute to the ATP site.

This sequence belongs to the bacterial CoaD family. As to quaternary structure, homohexamer. Mg(2+) is required as a cofactor.

It localises to the cytoplasm. The catalysed reaction is (R)-4'-phosphopantetheine + ATP + H(+) = 3'-dephospho-CoA + diphosphate. It participates in cofactor biosynthesis; coenzyme A biosynthesis; CoA from (R)-pantothenate: step 4/5. Its function is as follows. Reversibly transfers an adenylyl group from ATP to 4'-phosphopantetheine, yielding dephospho-CoA (dPCoA) and pyrophosphate. In Methylacidiphilum infernorum (isolate V4) (Methylokorus infernorum (strain V4)), this protein is Phosphopantetheine adenylyltransferase.